The following is a 746-amino-acid chain: Stromal interaction molecule 2 (746 aa).

The N-terminal stretch at methionine 1–glycine 14 is a signal peptide. Residues cysteine 15–phenylalanine 218 are Extracellular-facing. Serine 28 carries the phosphoserine modification. Residues phenylalanine 67–tyrosine 102 enclose the EF-hand domain. Ca(2+)-binding residues include aspartate 80, aspartate 82, aspartate 84, and glutamate 91. Asparagine 135 carries N-linked (GlcNAc...) asparagine glycosylation. Positions tryptophan 136 to phenylalanine 204 constitute an SAM domain. The chain crosses the membrane as a helical span at residues isoleucine 219–tyrosine 235. Residues threonine 236–lysine 746 lie on the Cytoplasmic side of the membrane. Residues lysine 247–valine 394 adopt a coiled-coil conformation. 2 disordered regions span residues proline 490–leucine 562 and aspartate 592–proline 651. Serine 523 carries the phosphoserine modification. Residues glutamine 527–alanine 539 are compositionally biased toward low complexity. Positions histidine 540–histidine 549 are enriched in basic residues. Phosphoserine is present on residues serine 609 and serine 621. Residues isoleucine 625–arginine 637 are compositionally biased toward basic and acidic residues. Residues serine 640, serine 650, serine 661, serine 665, serine 680, and serine 697 each carry the phosphoserine modification. The disordered stretch occupies residues leucine 684–lysine 746. The segment covering aspartate 723–lysine 732 has biased composition (basic and acidic residues). Positions lysine 733–lysine 746 are enriched in basic residues.

Oligomer with STIM1. Interacts with ORAI1. In terms of processing, glycosylated. Post-translationally, phosphorylated predominantly on Ser residues.

It localises to the endoplasmic reticulum membrane. Its function is as follows. Plays a role in mediating store-operated Ca(2+) entry (SOCE), a Ca(2+) influx following depletion of intracellular Ca(2+) stores. Functions as a highly sensitive Ca(2+) sensor in the endoplasmic reticulum which activates both store-operated and store-independent Ca(2+)-influx. Regulates basal cytosolic and endoplasmic reticulum Ca(2+) concentrations. Upon mild variations of the endoplasmic reticulum Ca(2+) concentration, translocates from the endoplasmic reticulum to the plasma membrane where it probably activates the Ca(2+) release-activated Ca(2+) (CRAC) channels ORAI1, ORAI2 and ORAI3. May inhibit STIM1-mediated Ca(2+) influx. The polypeptide is Stromal interaction molecule 2 (Stim2) (Mus musculus (Mouse)).